The chain runs to 182 residues: UPF0316 protein BCB4264_A3368 (182 aa).

The next 3 helical transmembrane spans lie at 6-26 (LIFV…ILLV), 32-52 (SAAG…GIVF), and 58-78 (WMNI…GGYI).

This sequence belongs to the UPF0316 family.

The protein localises to the cell membrane. This chain is UPF0316 protein BCB4264_A3368, found in Bacillus cereus (strain B4264).